Consider the following 189-residue polypeptide: Elongation factor P 2 (189 aa).

Belongs to the elongation factor P family.

The protein resides in the cytoplasm. The protein operates within protein biosynthesis; polypeptide chain elongation. Involved in peptide bond synthesis. Stimulates efficient translation and peptide-bond synthesis on native or reconstituted 70S ribosomes in vitro. Probably functions indirectly by altering the affinity of the ribosome for aminoacyl-tRNA, thus increasing their reactivity as acceptors for peptidyl transferase. This Mesorhizobium japonicum (strain LMG 29417 / CECT 9101 / MAFF 303099) (Mesorhizobium loti (strain MAFF 303099)) protein is Elongation factor P 2.